A 490-amino-acid chain; its full sequence is V-type proton ATPase subunit B (490 aa).

Arg-380 contributes to the ATP binding site.

The protein belongs to the ATPase alpha/beta chains family. V-ATPase is a heteromultimeric enzyme made up of two complexes: the ATP-hydrolytic V1 complex and the proton translocation V0 complex. The V1 complex consists of three catalytic AB heterodimers that form a heterohexamer, three peripheral stalks each consisting of EG heterodimers, one central rotor including subunits D and F, and the regulatory subunits C and H. The proton translocation complex V0 consists of the proton transport subunit a, a ring of proteolipid subunits c9c'', rotary subunit d, subunits e and f, and the accessory subunits VhaAC45 and ATP6AP2. Expressed in Malpighian tubules, rectum, antennal palps and oviduct.

Non-catalytic subunit of the V1 complex of vacuolar(H+)-ATPase (V-ATPase), a multisubunit enzyme composed of a peripheral complex (V1) that hydrolyzes ATP and a membrane integral complex (V0) that translocates protons. V-ATPase is responsible for acidifying and maintaining the pH of intracellular compartments and in some cell types, is targeted to the plasma membrane, where it is responsible for acidifying the extracellular environment. Essential for the proper assembly and activity of V-ATPase. The protein is V-type proton ATPase subunit B (Vha55) of Drosophila melanogaster (Fruit fly).